The following is a 188-amino-acid chain: UPF0398 protein SE_1135 (188 aa).

Belongs to the UPF0398 family.

The chain is UPF0398 protein SE_1135 from Staphylococcus epidermidis (strain ATCC 12228 / FDA PCI 1200).